Consider the following 651-residue polypeptide: Sodium/potassium/calcium exchanger 2 (651 aa).

The Cytoplasmic segment spans residues 1–38 (MALCKKTVGSVLEEWCLNEPLFGCKRHQNVRKKLRLIR). A helical membrane pass occupies residues 39-59 (IIGLLVSVVAISTFSLSISAF). Residues 60–134 (FKMETHSTVL…DLFSLEERRK (75 aa)) lie on the Extracellular side of the membrane. Positions 92–123 (QNEGSTPDSPTSMKHEAEHDNATEEHSKGEYP) are disordered. Over residues 93–103 (NEGSTPDSPTS) the composition is skewed to polar residues. The segment covering 104–122 (MKHEAEHDNATEEHSKGEY) has biased composition (basic and acidic residues). N112 carries an N-linked (GlcNAc...) asparagine glycan. Residues 135-155 (GAVILHVIGMIYMFIALAIVC) traverse the membrane as a helical segment. Over 156-179 (DEFFVPSLTVITEKLSISDDVAGA) the chain is Cytoplasmic. The Alpha-1 repeat unit spans residues 176–216 (VAGATFMAAGGSAPELFTSLIGVFISHSNVGIGTIVGSAVF). A helical membrane pass occupies residues 180–200 (TFMAAGGSAPELFTSLIGVFI). The Extracellular portion of the chain corresponds to 201-206 (SHSNVG). A helical membrane pass occupies residues 207–227 (IGTIVGSAVFNILFVIGMCAL). Residues 228–245 (FSREILNLTWWPLFRDVS) are Cytoplasmic-facing. Residues 246 to 266 (FYIVDLILLIIFFLDNLIMWW) traverse the membrane as a helical segment. The Extracellular portion of the chain corresponds to 267 to 459 (ESLTLLTAYF…SLAWPDTPRK (193 aa)). A compositionally biased stretch (basic and acidic residues) spans 304 to 322 (ATTGDAEGKSPTAGDKDDQ). Residues 304–338 (ATTGDAEGKSPTAGDKDDQTLTTKPRLQRGGSSAS) are disordered. A compositionally biased stretch (polar residues) spans 323-338 (TLTTKPRLQRGGSSAS). A helical membrane pass occupies residues 460–480 (QLTYLLVLPIVFPLWVSLPDV). The Cytoplasmic portion of the chain corresponds to 481-487 (RNPRSRK). A helical transmembrane segment spans residues 488 to 508 (FFPITFFGSISWIAFFSYLMV). At 509–523 (WWAHQVGETIGISEE) the chain is on the extracellular side. Residues 524–544 (IMGLTILAAGTSIPDLITSVI) form a helical membrane-spanning segment. Residues 531 to 562 (AAGTSIPDLITSVIVARKGLGDMAVSSSVGSN) form an Alpha-2 repeat. The Cytoplasmic segment spans residues 545–562 (VARKGLGDMAVSSSVGSN). A helical transmembrane segment spans residues 563–583 (IFDITVGLPLPWLLYAVINNF). The Extracellular portion of the chain corresponds to 584-592 (SPVTVSSNG). Residues 593–613 (LFCAIVLLFIMLLFVILSIAF) form a helical membrane-spanning segment. The Cytoplasmic segment spans residues 614–620 (CKWRMNK). Residues 621-641 (FLGFLMFGLYFVFLIVSVLLE) traverse the membrane as a helical segment. Topologically, residues 642–651 (DKVIQCPVSI) are extracellular.

Belongs to the Ca(2+):cation antiporter (CaCA) (TC 2.A.19) family. SLC24A subfamily. As to expression, retinal cones. Found in the cone inner segment layer and in a subpopulation of ganglion cells.

The protein localises to the cell membrane. It carries out the reaction Ca(2+)(out) + K(+)(out) + 4 Na(+)(in) = Ca(2+)(in) + K(+)(in) + 4 Na(+)(out). In terms of biological role, calcium, potassium:sodium antiporter that transports 1 Ca(2+) and 1 K(+) in exchange for 4 Na(+). Required for learming and memory by regulating neuronal Ca(2+), which is essential for the development of synaptic plasticity. In Gallus gallus (Chicken), this protein is Sodium/potassium/calcium exchanger 2 (SLC24A2).